We begin with the raw amino-acid sequence, 454 residues long: Putative tyrosine kinase 36 (454 aa).

Residues 80–88 and Lys-98 each bind ATP; that span reads LGSGSFGKV. Asp-192 functions as the Proton acceptor in the catalytic mechanism.

The protein belongs to the protein kinase superfamily. Tyr protein kinase family.

The enzyme catalyses L-tyrosyl-[protein] + ATP = O-phospho-L-tyrosyl-[protein] + ADP + H(+). The sequence is that of Putative tyrosine kinase 36 (36) from Alcelaphine herpesvirus 1 (strain C500) (AlHV-1).